The sequence spans 342 residues: viral G-protein coupled receptor (342 aa).

Topologically, residues 1–51 (MAAEDFLTIFLDDDESWNETLNMSGYDYSGNFSLEVSVCEMTTVVPYTWNV) are extracellular. Asn-18, Asn-22, and Asn-31 each carry an N-linked (GlcNAc...) asparagine; by host glycan. The helical transmembrane segment at 52–72 (GILSLIFLINVLGNGLVTYIF) threads the bilayer. Over 73–92 (CKHRSRAGAIDILLLGICLN) the chain is Cytoplasmic. A helical membrane pass occupies residues 93 to 113 (SLCLSISLLAEVLMFLFPNII). Topologically, residues 114 to 121 (STGLCRLE) are extracellular. A helical membrane pass occupies residues 122-142 (IFFYYLYVYLDIFSVVCVSLV). Residues 143–159 (RYLLVAYSTRSWPKKQS) are Cytoplasmic-facing. A helical transmembrane segment spans residues 160 to 180 (LGWVLTSAALLIALVLSGDAC). Residues 181–217 (RHRSRVVDPVSKQAMCYENAGNMTADWRLHVRTVSVT) lie on the Extracellular side of the membrane. A helical membrane pass occupies residues 218-238 (AGFLLPLALLILFYALTWCVV). The Cytoplasmic segment spans residues 239-251 (RRTKLQARRKVRG). Residues 252 to 272 (VIVAVVLLFFVFCFPYHVLNL) form a helical membrane-spanning segment. Over 273-293 (LDTLLRRRWIRDSCYTRGLIN) the chain is Extracellular. A helical transmembrane segment spans residues 294–314 (VGLAVTSLLQALYSAVVPLIY). The Cytoplasmic portion of the chain corresponds to 315–342 (SCLGSLFRQRMYGLFQSLRQSFMSGATT).

The protein belongs to the G-protein coupled receptor 1 family. In terms of assembly, interacts with protein K7; this interaction promotes vGPCR proteasomal degradation. Interacts with host CADM1; this interaction is essential for chronic NF-kappa-B activation.

It localises to the host cell membrane. In terms of biological role, receptor that signals constitutively via several signaling pathways including PI3K/AKT as well as mitogen- and stress-activated/MAP kinases. Promotes host cell proliferation and survival, modulates cell migration, stimulates angiogenesis, and recruits inflammatory cells, both in expressing cells and in neighboring cells. Maintains chronic activation of NF-kappa-B via interaction with host CADM1. The polypeptide is viral G-protein coupled receptor (ORF74) (Human herpesvirus 8 type P (isolate GK18) (HHV-8)).